A 201-amino-acid chain; its full sequence is ATP-dependent Clp protease proteolytic subunit (201 aa).

Catalysis depends on S100, which acts as the Nucleophile. Residue H125 is part of the active site.

Belongs to the peptidase S14 family. In terms of assembly, component of the chloroplastic Clp protease core complex.

The protein resides in the plastid. It localises to the chloroplast stroma. It carries out the reaction Hydrolysis of proteins to small peptides in the presence of ATP and magnesium. alpha-casein is the usual test substrate. In the absence of ATP, only oligopeptides shorter than five residues are hydrolyzed (such as succinyl-Leu-Tyr-|-NHMec, and Leu-Tyr-Leu-|-Tyr-Trp, in which cleavage of the -Tyr-|-Leu- and -Tyr-|-Trp bonds also occurs).. Functionally, cleaves peptides in various proteins in a process that requires ATP hydrolysis. Has a chymotrypsin-like activity. Plays a major role in the degradation of misfolded proteins. This Ranunculus macranthus (Large buttercup) protein is ATP-dependent Clp protease proteolytic subunit.